The following is a 383-amino-acid chain: Acetylornithine deacetylase (383 aa).

Position 80 (His80) interacts with Zn(2+). Asp82 is an active-site residue. Asp112 serves as a coordination point for Zn(2+). Glu144 is an active-site residue. Zn(2+) is bound by residues Glu145, Glu169, and His355.

The protein belongs to the peptidase M20A family. ArgE subfamily. In terms of assembly, homodimer. Requires Zn(2+) as cofactor. The cofactor is Co(2+). It depends on glutathione as a cofactor.

The protein localises to the cytoplasm. It catalyses the reaction N(2)-acetyl-L-ornithine + H2O = L-ornithine + acetate. It participates in amino-acid biosynthesis; L-arginine biosynthesis; L-ornithine from N(2)-acetyl-L-ornithine (linear): step 1/1. Its function is as follows. Catalyzes the hydrolysis of the amide bond of N(2)-acetylated L-amino acids. Cleaves the acetyl group from N-acetyl-L-ornithine to form L-ornithine, an intermediate in L-arginine biosynthesis pathway, and a branchpoint in the synthesis of polyamines. In Shigella flexneri, this protein is Acetylornithine deacetylase.